Reading from the N-terminus, the 297-residue chain is Cytosolic Fe-S cluster assembly factor CFD1 (297 aa).

Position 15-22 (15-22 (GKGGVGKS)) interacts with ATP. Cysteine 216 and cysteine 219 together coordinate [4Fe-4S] cluster.

This sequence belongs to the Mrp/NBP35 ATP-binding proteins family. NUBP2/CFD1 subfamily. In terms of assembly, heterotetramer of 2 NBP35 and 2 CFD1 chains. [4Fe-4S] cluster is required as a cofactor.

It is found in the cytoplasm. Component of the cytosolic iron-sulfur (Fe/S) protein assembly (CIA) machinery. Required for maturation of extramitochondrial Fe-S proteins. The NBP35-CFD1 heterotetramer forms a Fe-S scaffold complex, mediating the de novo assembly of an Fe-S cluster and its transfer to target apoproteins. The protein is Cytosolic Fe-S cluster assembly factor CFD1 of Phaeosphaeria nodorum (strain SN15 / ATCC MYA-4574 / FGSC 10173) (Glume blotch fungus).